The primary structure comprises 481 residues: RAC-beta serine/threonine-protein kinase (481 aa).

An N-acetylmethionine modification is found at M1. Positions 5 to 108 (SVIKEGWLHK…WMRAIQMVAN (104 aa)) constitute a PH domain. At S34 the chain carries Phosphoserine. A disulfide bridge links C60 with C77. S126 is modified (phosphoserine). 2 O-linked (GlcNAc) serine glycosylation sites follow: S128 and S131. One can recognise a Protein kinase domain in the interval 152–409 (FDYLKLLGKG…AKEVMEHRFF (258 aa)). ATP is bound by residues 158 to 166 (LGKGTFGKV) and K181. The active-site Proton acceptor is the D275. Mn(2+)-binding residues include N280 and D293. A disulfide bridge links C297 with C311. An O-linked (GlcNAc) threonine glycan is attached at T306. Phosphothreonine; by PDPK1 is present on T309. A glycan (O-linked (GlcNAc) threonine) is linked at T313. One can recognise an AGC-kinase C-terminal domain in the interval 410-481 (LSINWQDVVQ…QFSYSASIRE (72 aa)). Residue S447 is modified to Phosphoserine. T451 bears the Phosphothreonine mark. Phosphoserine; by MTOR is present on residues S474 and S478. A glycan (O-linked (GlcNAc) serine; alternate) is linked at S474.

This sequence belongs to the protein kinase superfamily. AGC Ser/Thr protein kinase family. RAC subfamily. Interacts with BTBD10. Interacts with KCTD20. Interacts (via PH domain) with MTCP1, TCL1A and TCL1B; this interaction may facilitate AKT2 oligomerization and phosphorylation, hence increasing kinase activity. Interacts with PHB2; this interaction may be important for myogenic differentiation. Interacts (when phosphorylated) with CLIP3/ClipR-59; this interaction promotes cell membrane localization. Interacts with WDFY2 (via WD repeats 1-3). Post-translationally, phosphorylation on Thr-309 and Ser-474 is required for full activity. Phosphorylation of the activation loop at Thr-309 by PDPK1/PDK1 is a prerequisite for full activation. Phosphorylated and activated by PDPK1/PDK1 in the presence of phosphatidylinositol 3,4,5-trisphosphate. Phosphorylation by mTORC2 in response to growth factors plays a key role in AKT1 activation: mTORC2 phosphorylates different sites depending on the context, such as Ser-474 or Ser-478, thereby facilitating subsequent phosphorylation of the activation loop by PDPK1/PDK1. In terms of processing, ubiquitinated; undergoes both 'Lys-48'- and 'Lys-63'-linked polyubiquitination. TRAF6-induced 'Lys-63'-linked AKT2 ubiquitination. When fully phosphorylated and translocated into the nucleus, undergoes 'Lys-48'-polyubiquitination catalyzed by TTC3, leading to its degradation by the proteasome. O-GlcNAcylation at Thr-306 and Thr-313 inhibits activating phosphorylation at Thr-309 via disrupting the interaction between AKT and PDPK1/PDK1.

The protein localises to the cytoplasm. It is found in the nucleus. The protein resides in the cell membrane. Its subcellular location is the early endosome. The enzyme catalyses L-seryl-[protein] + ATP = O-phospho-L-seryl-[protein] + ADP + H(+). It catalyses the reaction L-threonyl-[protein] + ATP = O-phospho-L-threonyl-[protein] + ADP + H(+). Two specific sites, one in the kinase domain (Thr-309) and the other in the C-terminal regulatory region (Ser-474), need to be phosphorylated for its full activation. AKT2 phosphorylation of PKP1 is induced by insulin. Inhibited by Akt inhibitor MK2206. AKT2 is one of 3 closely related serine/threonine-protein kinases (AKT1, AKT2 and AKT3) called the AKT kinases, and which regulate many processes including metabolism, proliferation, cell survival, growth and angiogenesis. This is mediated through serine and/or threonine phosphorylation of a range of downstream substrates. Over 100 substrate candidates have been reported so far, but for most of them, no isoform specificity has been reported. AKT is responsible of the regulation of glucose uptake by mediating insulin-induced translocation of the SLC2A4/GLUT4 glucose transporter to the cell surface. Phosphorylation of PTPN1 at 'Ser-50' negatively modulates its phosphatase activity preventing dephosphorylation of the insulin receptor and the attenuation of insulin signaling. Phosphorylation of TBC1D4 triggers the binding of this effector to inhibitory 14-3-3 proteins, which is required for insulin-stimulated glucose transport. AKT also regulates the storage of glucose in the form of glycogen by phosphorylating GSK3A at 'Ser-21' and GSK3B at 'Ser-9', resulting in inhibition of its kinase activity. Phosphorylation of GSK3 isoforms by AKT is also thought to be one mechanism by which cell proliferation is driven. AKT also regulates cell survival via the phosphorylation of MAP3K5 (apoptosis signal-related kinase). Phosphorylation of 'Ser-83' decreases MAP3K5 kinase activity stimulated by oxidative stress and thereby prevents apoptosis. AKT mediates insulin-stimulated protein synthesis by phosphorylating TSC2 at 'Ser-939' and 'Thr-1462', thereby activating mTORC1 signaling and leading to both phosphorylation of 4E-BP1 and in activation of RPS6KB1. AKT is involved in the phosphorylation of members of the FOXO factors (Forkhead family of transcription factors), leading to binding of 14-3-3 proteins and cytoplasmic localization. In particular, FOXO1 is phosphorylated at 'Thr-24', 'Ser-256' and 'Ser-319'. FOXO3 and FOXO4 are phosphorylated on equivalent sites. AKT has an important role in the regulation of NF-kappa-B-dependent gene transcription and positively regulates the activity of CREB1 (cyclic AMP (cAMP)-response element binding protein). The phosphorylation of CREB1 induces the binding of accessory proteins that are necessary for the transcription of pro-survival genes such as BCL2 and MCL1. AKT phosphorylates 'Ser-454' on ATP citrate lyase (ACLY), thereby potentially regulating ACLY activity and fatty acid synthesis. Activates the 3B isoform of cyclic nucleotide phosphodiesterase (PDE3B) via phosphorylation of 'Ser-273', resulting in reduced cyclic AMP levels and inhibition of lipolysis. Phosphorylates PIKFYVE on 'Ser-318', which results in increased PI(3)P-5 activity. The Rho GTPase-activating protein DLC1 is another substrate and its phosphorylation is implicated in the regulation cell proliferation and cell growth. AKT plays a role as key modulator of the AKT-mTOR signaling pathway controlling the tempo of the process of newborn neurons integration during adult neurogenesis, including correct neuron positioning, dendritic development and synapse formation. Signals downstream of phosphatidylinositol 3-kinase (PI(3)K) to mediate the effects of various growth factors such as platelet-derived growth factor (PDGF), epidermal growth factor (EGF), insulin and insulin-like growth factor I (IGF-I). AKT mediates the antiapoptotic effects of IGF-I. Essential for the SPATA13-mediated regulation of cell migration and adhesion assembly and disassembly. May be involved in the regulation of the placental development. In response to lysophosphatidic acid stimulation, inhibits the ciliogenesis cascade. In this context, phosphorylates WDR44, hence stabilizing its interaction with Rab11 and preventing the formation of the ciliogenic Rab11-FIP3-RAB3IP complex. Also phosphorylates RAB3IP/Rabin8, thus may affect RAB3IP guanine nucleotide exchange factor (GEF) activity toward Rab8, which is important for cilia growth. Phosphorylates PKP1, facilitating its interaction with YWHAG and translocation to the nucleus, ultimately resulting in a reduction in keratinocyte intercellular adhesion. Phosphorylation of PKP1 increases PKP1 protein stability, translocation to the cytoplasm away from desmosome plaques and PKP1-driven cap-dependent translation. In terms of biological role, several AKT2-specific substrates have been identified, including ANKRD2, C2CD5, CLK2 and PITX2. May play a role in myoblast differentiation. In this context, may act through PITX2 phosphorylation. Unphosphorylated PITX2 associates with an ELAVL1/HuR-containing complex, which stabilizes cyclin mRNA and ensuring cell proliferation. Phosphorylation by AKT2 impairs this association, leading to CCND1 mRNA destabilization and progression towards differentiation. Also involved in the negative regulation of myogenesis in response to stress conditions. In this context, acts by phosphorylating ANKRD2. May also be a key regulator of glucose uptake. Regulates insulin-stimulated glucose transport by the increase of glucose transporter GLUT4 translocation from intracellular stores to the plasma membrane. In this context, acts by phosphorylating C2CD5/CDP138 on 'Ser-197' in insulin-stimulated adipocytes. Through the phosphorylation of CLK2 on 'Thr-343', involved in insulin-regulated suppression of hepatic gluconeogenesis. The sequence is that of RAC-beta serine/threonine-protein kinase (Akt2) from Mus musculus (Mouse).